A 193-amino-acid chain; its full sequence is Interferon epsilon (193 aa).

Positions Met-1–Ser-21 are cleaved as a signal peptide. Residues Cys-53 and Cys-163 are joined by a disulfide bond. Residue Asn-139 is glycosylated (N-linked (GlcNAc...) asparagine).

Belongs to the alpha/beta interferon family.

Its subcellular location is the secreted. Its function is as follows. Type I interferon required for maintaining basal levels of IFN-regulated genes, including 2'-5'-oligoadenylate synthetase, IRF7 and ISG15, in the female reproductive tract. Directly mediates protection against viral and bacterial genital infections. This Sus scrofa (Pig) protein is Interferon epsilon (IFNE).